A 101-amino-acid chain; its full sequence is DNA-binding protein TubR (101 aa).

As to quaternary structure, homodimer. Dimers bind to DNA, forming a protein-bound filament which may form a helix around the TubZ filament.

Functionally, a DNA-binding protein that is part of the type III plasmid partition system used to ensure correct segregation of the pBM400 plasmid. Binds the plasmid origin of replication, probably cooperatively, forming a ring or short helix with external DNA. Its effect on RNA expression has not been shown. This is DNA-binding protein TubR from Priestia megaterium (strain ATCC 12872 / QMB1551) (Bacillus megaterium).